The sequence spans 361 residues: GDSL esterase/lipase At2g40250 (361 aa).

Residues 1-28 (MNRNQHKPMFVTFLINILLLQLLNLTNA) form the signal peptide. Ser-43 acts as the Nucleophile in catalysis. Residues Asp-337 and His-340 contribute to the active site.

This sequence belongs to the 'GDSL' lipolytic enzyme family.

It localises to the secreted. The protein is GDSL esterase/lipase At2g40250 of Arabidopsis thaliana (Mouse-ear cress).